A 324-amino-acid chain; its full sequence is DNA primase small subunit PriS (324 aa).

Active-site residues include D94, D96, and D274.

This sequence belongs to the eukaryotic-type primase small subunit family. As to quaternary structure, heterodimer of a small subunit (PriS) and a large subunit (PriL). Requires Mg(2+) as cofactor. The cofactor is Mn(2+).

Catalytic subunit of DNA primase, an RNA polymerase that catalyzes the synthesis of short RNA molecules used as primers for DNA polymerase during DNA replication. The small subunit contains the primase catalytic core and has DNA synthesis activity on its own. Binding to the large subunit stabilizes and modulates the activity, increasing the rate of DNA synthesis while decreasing the length of the DNA fragments, and conferring RNA synthesis capability. The DNA polymerase activity may enable DNA primase to also catalyze primer extension after primer synthesis. May also play a role in DNA repair. The sequence is that of DNA primase small subunit PriS from Methanobrevibacter smithii (strain ATCC 35061 / DSM 861 / OCM 144 / PS).